A 436-amino-acid polypeptide reads, in one-letter code: GTPase Obg (436 aa).

The Obg domain maps to 2–160 (SMFLDTAKIK…RELQLELKIL (159 aa)). Positions 161 to 338 (ADVGLVGFPS…LLDATAELLD (178 aa)) constitute an OBG-type G domain. GTP-binding positions include 167-174 (GFPSVGKS), 192-196 (FTTIV), 214-217 (DLPG), 284-287 (NKMD), and 319-321 (SGL). 2 residues coordinate Mg(2+): Ser174 and Thr194. The OCT domain maps to 358–436 (GFDEEEKAFE…IGKFEFEFVD (79 aa)).

It belongs to the TRAFAC class OBG-HflX-like GTPase superfamily. OBG GTPase family. In terms of assembly, monomer. Requires Mg(2+) as cofactor.

The protein localises to the cytoplasm. In terms of biological role, an essential GTPase which binds GTP, GDP and possibly (p)ppGpp with moderate affinity, with high nucleotide exchange rates and a fairly low GTP hydrolysis rate. Plays a role in control of the cell cycle, stress response, ribosome biogenesis and in those bacteria that undergo differentiation, in morphogenesis control. This chain is GTPase Obg, found in Streptococcus pneumoniae (strain CGSP14).